The primary structure comprises 164 residues: Translocator protein homolog (164 aa).

5 consecutive transmembrane segments (helical) span residues 16–34, 52–72, 89–106, 112–132, and 141–163; these read WSASLVPVACGWFIGNSYK, SAFGPAWTLLYLTMGYASHLA, ILYIAQLAANFAWMPLFY, KLALADLGILTGLVGWLAKTW, and KWLIPYLAWLGYAGYLNLGYCLL.

It belongs to the TspO/BZRP family.

The protein localises to the mitochondrion membrane. Functionally, may play a role in the transport of porphyrins and heme. This chain is Translocator protein homolog, found in Schizosaccharomyces pombe (strain 972 / ATCC 24843) (Fission yeast).